The following is a 400-amino-acid chain: Lysophospholipid transporter LplT (400 aa).

Helical transmembrane passes span 19–39 (VIVA…ATLA), 53–73 (VLQM…GQIA), 91–111 (AGAA…LVGI), 139–159 (LMEA…GVLA), 164–184 (IAAL…NLFI), 195–213 (SWRL…VVLW), 227–247 (LFWG…PVAL), 257–277 (YLNA…AKLV), 281–301 (TVSR…IFSL), 304–324 (ALLP…FFVV), 352–372 (NSAM…GVPA), and 373–393 (VAIG…LWIW).

It belongs to the major facilitator superfamily. LplT (TC 2.A.1.42) family.

It localises to the cell inner membrane. Functionally, catalyzes the facilitated diffusion of 2-acyl-glycero-3-phosphoethanolamine (2-acyl-GPE) into the cell. This chain is Lysophospholipid transporter LplT, found in Salmonella agona (strain SL483).